The chain runs to 415 residues: tRNA(Ile2) 2-agmatinylcytidine synthetase TiaS (415 aa).

Belongs to the TiaS family.

It localises to the cytoplasm. It catalyses the reaction cytidine(34) in tRNA(Ile2) + agmatine + ATP + H2O = 2-agmatinylcytidine(34) in tRNA(Ile2) + AMP + 2 phosphate + 2 H(+). Its function is as follows. ATP-dependent agmatine transferase that catalyzes the formation of 2-agmatinylcytidine (agm2C) at the wobble position (C34) of tRNA(Ile2), converting the codon specificity from AUG to AUA. This Pyrobaculum neutrophilum (strain DSM 2338 / JCM 9278 / NBRC 100436 / V24Sta) (Thermoproteus neutrophilus) protein is tRNA(Ile2) 2-agmatinylcytidine synthetase TiaS.